Reading from the N-terminus, the 457-residue chain is Bifunctional protein GlmU (457 aa).

Residues 1-229 form a pyrophosphorylase region; that stretch reads MYNCAIILAA…YEEIMGVNSR (229 aa). Residues 8-11, Lys22, Gln73, and 78-79 contribute to the UDP-N-acetyl-alpha-D-glucosamine site; these read LAAG and GT. Asp103 is a Mg(2+) binding site. UDP-N-acetyl-alpha-D-glucosamine-binding residues include Gly140, Glu155, Asn170, and Asn227. Mg(2+) is bound at residue Asn227. The segment at 230–250 is linker; the sequence is VQLSEAEIVMRKRINHKHMVN. An N-acetyltransferase region spans residues 251 to 457; the sequence is GVTFIDCEST…WLDKKGLLKK (207 aa). The UDP-N-acetyl-alpha-D-glucosamine site is built by Arg332 and Lys350. The active-site Proton acceptor is His362. Residues Tyr365 and Asn376 each coordinate UDP-N-acetyl-alpha-D-glucosamine. Residues 385 to 386, Ala422, and Arg439 each bind acetyl-CoA; that span reads NY.

The protein in the N-terminal section; belongs to the N-acetylglucosamine-1-phosphate uridyltransferase family. This sequence in the C-terminal section; belongs to the transferase hexapeptide repeat family. Homotrimer. Requires Mg(2+) as cofactor.

The protein localises to the cytoplasm. It catalyses the reaction alpha-D-glucosamine 1-phosphate + acetyl-CoA = N-acetyl-alpha-D-glucosamine 1-phosphate + CoA + H(+). It carries out the reaction N-acetyl-alpha-D-glucosamine 1-phosphate + UTP + H(+) = UDP-N-acetyl-alpha-D-glucosamine + diphosphate. It participates in nucleotide-sugar biosynthesis; UDP-N-acetyl-alpha-D-glucosamine biosynthesis; N-acetyl-alpha-D-glucosamine 1-phosphate from alpha-D-glucosamine 6-phosphate (route II): step 2/2. The protein operates within nucleotide-sugar biosynthesis; UDP-N-acetyl-alpha-D-glucosamine biosynthesis; UDP-N-acetyl-alpha-D-glucosamine from N-acetyl-alpha-D-glucosamine 1-phosphate: step 1/1. It functions in the pathway bacterial outer membrane biogenesis; LPS lipid A biosynthesis. Functionally, catalyzes the last two sequential reactions in the de novo biosynthetic pathway for UDP-N-acetylglucosamine (UDP-GlcNAc). The C-terminal domain catalyzes the transfer of acetyl group from acetyl coenzyme A to glucosamine-1-phosphate (GlcN-1-P) to produce N-acetylglucosamine-1-phosphate (GlcNAc-1-P), which is converted into UDP-GlcNAc by the transfer of uridine 5-monophosphate (from uridine 5-triphosphate), a reaction catalyzed by the N-terminal domain. The protein is Bifunctional protein GlmU of Clostridium botulinum (strain Kyoto / Type A2).